The primary structure comprises 538 residues: Phosphoenolpyruvate carboxykinase (ATP) (538 aa).

Arg64 is a substrate binding site. Ca(2+) contacts are provided by Asn149 and Phe151. 2 residues coordinate substrate: Tyr206 and Lys212. Residues Lys212, His231, and 247–255 (GLSGTGKTT) each bind ATP. 2 residues coordinate Mn(2+): Lys212 and His231. Asp268 serves as a coordination point for Mn(2+). ATP contacts are provided by residues Glu296, Arg332, 447–448 (RI), and Thr453. Arg332 is a substrate binding site.

Belongs to the phosphoenolpyruvate carboxykinase (ATP) family. In terms of assembly, monomer. The cofactor is Mn(2+).

It localises to the cytoplasm. The catalysed reaction is oxaloacetate + ATP = phosphoenolpyruvate + ADP + CO2. It functions in the pathway carbohydrate biosynthesis; gluconeogenesis. With respect to regulation, allosterically activated by calcium. Its function is as follows. Involved in the gluconeogenesis. Catalyzes the conversion of oxaloacetate (OAA) to phosphoenolpyruvate (PEP) through direct phosphoryl transfer between the nucleoside triphosphate and OAA. This is Phosphoenolpyruvate carboxykinase (ATP) from Salmonella typhimurium (strain LT2 / SGSC1412 / ATCC 700720).